The following is an 83-amino-acid chain: UPF0346 protein M28_Spy0369 (83 aa).

Belongs to the UPF0346 family.

The chain is UPF0346 protein M28_Spy0369 from Streptococcus pyogenes serotype M28 (strain MGAS6180).